Reading from the N-terminus, the 154-residue chain is Protein MGF 300-2R (154 aa).

It belongs to the asfivirus MGF 300 family.

Functionally, plays a role in virus cell tropism, and may be required for efficient virus replication in macrophages. This is Protein MGF 300-2R from Ornithodoros (relapsing fever ticks).